The sequence spans 647 residues: Centrosomal protein of 72 kDa (647 aa).

LRR repeat units follow at residues 29–50, 55–76, and 77–98; these read ELQS…GHSL, GLKS…QYLT, and ALES…FRLH. The LRRCT domain maps to 111-150; sequence NPVVKVEPDYRLFVVHLLPKLQQLDDRPVRASERKASRLH. Basic and acidic residues-rich tracts occupy residues 152–161 and 220–234; these read ASEDSLDSKE and KGRE…ESRH. 3 disordered regions span residues 152-176, 211-256, and 285-413; these read ASED…HHPR, PPGS…RETR, and PEAS…ALPG. Residue Ser237 is modified to Phosphoserine. Residues 366-377 are compositionally biased toward basic and acidic residues; the sequence is SLSRQDSSESRN. Position 382 is a phosphoserine (Ser382). The span at 390-402 shows a compositional bias: basic and acidic residues; the sequence is EEQRSRGVTDTRE. Residue Ser404 is modified to Phosphoserine. Positions 476-620 form a coiled coil; it reads SLALESKSLQ…AQHRAEVEQM (145 aa).

This sequence belongs to the CEP72 family. In terms of assembly, interacts with KIZ, PCM1 and CDK5RAP2.

It localises to the cytoplasm. It is found in the cytoskeleton. Its subcellular location is the microtubule organizing center. The protein resides in the centrosome. The protein localises to the centriolar satellite. Involved in the recruitment of key centrosomal proteins to the centrosome. Provides centrosomal microtubule-nucleation activity on the gamma-tubulin ring complexes (gamma-TuRCs) and has critical roles in forming a focused bipolar spindle, which is needed for proper tension generation between sister chromatids. Required for localization of KIZ, AKAP9 and gamma-tubulin ring complexes (gamma-TuRCs). Involved in centriole duplication. Required for CDK5RAP22, CEP152, WDR62 and CEP63 centrosomal localization and promotes the centrosomal localization of CDK2. The chain is Centrosomal protein of 72 kDa (CEP72) from Homo sapiens (Human).